A 273-amino-acid chain; its full sequence is Large ribosomal subunit protein uL2 (273 aa).

Residues 221-273 form a disordered region; it reads RGTAMNPVDHPHGGGEGRNFGKHPVTPWGIQTKGKKTRSNKRTDKFIVRRRSK.

It belongs to the universal ribosomal protein uL2 family. As to quaternary structure, part of the 50S ribosomal subunit. Forms a bridge to the 30S subunit in the 70S ribosome.

In terms of biological role, one of the primary rRNA binding proteins. Required for association of the 30S and 50S subunits to form the 70S ribosome, for tRNA binding and peptide bond formation. It has been suggested to have peptidyltransferase activity; this is somewhat controversial. Makes several contacts with the 16S rRNA in the 70S ribosome. The polypeptide is Large ribosomal subunit protein uL2 (Sodalis glossinidius (strain morsitans)).